A 1030-amino-acid polypeptide reads, in one-letter code: Leucine-rich repeat and coiled-coil domain-containing protein 1 (1030 aa).

6 LRR repeats span residues 7–28 (RNRE…CLNS), 29–50 (NLYS…RHLC), 51–72 (YLQH…DSLA), 73–94 (SLQS…EKLF), 95–116 (NLKK…IPLH), and 121–142 (KLSH…LQST). The 41-residue stretch at 160–200 (NPVCHALGYREIILENLPQLNSLDGLDRSGDPVTAHEVDSM) folds into the LRRCT domain. A disordered region spans residues 298-401 (KSEQTKLKAK…GQILGKPHAI (104 aa)). Residues 300-311 (EQTKLKAKRDTD) are compositionally biased toward basic and acidic residues. Polar residues-rich tracts occupy residues 338–368 (KTSQ…SRKQ) and 378–393 (ETSL…STGQ). The stretch at 432-645 (RERRWKAEQV…DLEDEFRAAL (214 aa)) forms a coiled coil.

It belongs to the LRRCC1 family.

The protein resides in the cytoplasm. The protein localises to the cytoskeleton. It is found in the microtubule organizing center. Its subcellular location is the centrosome. It localises to the centriole. Its function is as follows. Required for the organization of the mitotic spindle. Maintains the structural integrity of centrosomes during mitosis. The protein is Leucine-rich repeat and coiled-coil domain-containing protein 1 (lrrcc1) of Xenopus laevis (African clawed frog).